Here is a 692-residue protein sequence, read N- to C-terminus: Pentatricopeptide repeat-containing protein At2g04860 (692 aa).

PPR repeat units lie at residues 12–46, 47–83, 84–114, 115–149, 150–184, 185–215, 216–250, 280–314, 316–345, 346–380, 381–411, 412–447, 448–482, 483–513, 514–548, 549–584, and 585–615; these read DLSY…SLTP, NHFT…GLDR, FVYV…MPER, DTVV…GFSP, SATT…GLEL, DSQV…MKDK, STVS…NVEI, DISV…SIVG, TSIV…CMKI, DAVA…GLCT, KTLV…LQET, PLIS…GLLP, DAIT…NFEN, ENFV…IKAP, CTAT…GLKP, DEIT…GISP, and TLQH…MDIK. Positions 620–692 are type E motif; degenerate; it reads VWGALLSACI…YDGYLGVSQI (73 aa).

The protein belongs to the PPR family. PCMP-E subfamily.

This is Pentatricopeptide repeat-containing protein At2g04860 (PCMP-E74) from Arabidopsis thaliana (Mouse-ear cress).